We begin with the raw amino-acid sequence, 119 residues long: Mitochondrial coiled-coil domain protein 1 (119 aa).

The N-terminal 24 residues, 1-24, are a transit peptide targeting the mitochondrion; that stretch reads MVLPLPWLSRYHFLRLLLPSWSLA. A disordered region spans residues 25–65; it reads PQGSHGCCSQNPKASMEEQTSSRGNGKMTSPPRGPGTHRTA. Residues 31 to 52 show a composition bias toward polar residues; that stretch reads CCSQNPKASMEEQTSSRGNGKM. Positions 62 to 116 form a coiled coil; it reads HRTAELARAEELLEQQLELYQALLEGQEGAWEAQALVLKIQKLKEQMRRHQESLG.

In terms of tissue distribution, widely expressed. Expressed in adult and fetal liver, kidney and lung. Expressed in fetal brain. Weakly expressed in fetal spleen.

The protein localises to the mitochondrion. The protein is Mitochondrial coiled-coil domain protein 1 (MCCD1) of Homo sapiens (Human).